We begin with the raw amino-acid sequence, 218 residues long: Thiopurine S-methyltransferase (218 aa).

Residues Trp-10, Leu-45, Glu-66, and Arg-123 each coordinate S-adenosyl-L-methionine.

This sequence belongs to the class I-like SAM-binding methyltransferase superfamily. TPMT family.

The protein localises to the cytoplasm. It catalyses the reaction S-adenosyl-L-methionine + a thiopurine = S-adenosyl-L-homocysteine + a thiopurine S-methylether.. This chain is Thiopurine S-methyltransferase, found in Shewanella amazonensis (strain ATCC BAA-1098 / SB2B).